A 415-amino-acid chain; its full sequence is Gamma-glutamyl phosphate reductase (415 aa).

It belongs to the gamma-glutamyl phosphate reductase family.

The protein resides in the cytoplasm. The enzyme catalyses L-glutamate 5-semialdehyde + phosphate + NADP(+) = L-glutamyl 5-phosphate + NADPH + H(+). It participates in amino-acid biosynthesis; L-proline biosynthesis; L-glutamate 5-semialdehyde from L-glutamate: step 2/2. Its function is as follows. Catalyzes the NADPH-dependent reduction of L-glutamate 5-phosphate into L-glutamate 5-semialdehyde and phosphate. The product spontaneously undergoes cyclization to form 1-pyrroline-5-carboxylate. In Lachnospira eligens (strain ATCC 27750 / DSM 3376 / VPI C15-48 / C15-B4) (Eubacterium eligens), this protein is Gamma-glutamyl phosphate reductase.